We begin with the raw amino-acid sequence, 179 residues long: MSRIGLRPIEIPQGVEVKIDEKNFAVVKGPKGTLEQQLSKDMEIKIEENVINVVRPTDNKKHKSLHGLTRTLLSNMVEGVTKGYEKKLELVGVGYRANKQGDKLVLTLGFSHPIEMVDPEGITVEVPSQTEIFVKGINKQVVGNYAAKIRELRKPEPYKGKGVKYANEVIRRKVGKTGK.

This sequence belongs to the universal ribosomal protein uL6 family. In terms of assembly, part of the 50S ribosomal subunit.

Its function is as follows. This protein binds to the 23S rRNA, and is important in its secondary structure. It is located near the subunit interface in the base of the L7/L12 stalk, and near the tRNA binding site of the peptidyltransferase center. In Alkaliphilus oremlandii (strain OhILAs) (Clostridium oremlandii (strain OhILAs)), this protein is Large ribosomal subunit protein uL6.